The sequence spans 253 residues: Uroplakin-3b-like protein 1 (253 aa).

An N-terminal signal peptide occupies residues 1–26; the sequence is MGLGRGQSPLLMALLLLLACLQMGMS. Topologically, residues 27–194 are extracellular; it reads LERISYVPQL…PGPQTAGTVV (168 aa). N-linked (GlcNAc...) asparagine glycans are attached at residues N78 and N130. A helical transmembrane segment spans residues 195–215; sequence IIAILSVLLAVLLAALLALLI. Over 216 to 253 the chain is Cytoplasmic; sequence FTWYDTCGSTPISGPGELVFVRKYDTHHMSRPSTVGGS.

Belongs to the uroplakin-3 family.

It is found in the membrane. This Bos taurus (Bovine) protein is Uroplakin-3b-like protein 1.